Reading from the N-terminus, the 1571-residue chain is MSFTLHSVFFTLKVSIFLGSLVGLCLGLEFMGLPNQWARYLRWDASTRSDLSFQFKTNVSTGLLLYLDDGGVCDFLCLSLVDGRVQLRFSMDCAETTVLSNKQVNDSSWHFLMVSRDRVRTGLVIDGEGQSGELRPQRPYMDVVSDLFLGGVPADIRPSALTLDGVQSMPGFKGLMLDLKYGNSEPRLLGSQSVQLEAEGPCGERPCENGGICFLLDGHPTCDCSTTGYGGTLCSEDVSQGPGLSHLMMSEQAREENVATFRGSEYLCYDLSQNPIQSSSDEITLSFKTWQRNGLILHTGKSADYVNLALKDGAVSLVINLGSGAFEAIVEPVNGKFNDNAWHDVKVTRNLRQVTISVDGILTTTGYTQEDYTMLGSDDFFYVGGSPSTADLPGSPVSNNFMGCLKEVVYKNNDIRLELSRLARIGDTKMKIYGEVVFKCENVATLDPINFETPEAYISLPKWNTKRMGSISFDFRTTEPNGLILFTHGKPQERKDVRSQKNTKVDFFAVELLDGNLYLLLDMGSGTIKVKATQKKANDGEWYHVDIQRDGRSGTISVNSRRTPFTASGESEILDLEGDMYLGGLPENRAGLILPTELWTAMLNYGYVGCIRDLFIDGRSKNIRQLAEMQNAAGVKSSCSRMSAKQCDSYPCKNNAVCKDGWNRFICDCTGTGYWGRTCEREASILSYDGSMYMKVIMPMVMHTEAEDVSFRFMSQRAYGLLVATTSRDSADTLRLELDGGRVKLMVNLDCIRINCNSSKGPETLYAGQKLNDNEWHTVRVVRRGKSLKLTVDDDVAEGTMVGDHTRLEFHNIETGIMTEKRYISVVPSSFIGHLQSLMFNGLLYIDLCKNGDIDYCELKARFGLRNIIADPVTFKTKSSYLTLATLQAYTSMHLFFQFKTTSADGFILFNSGDGNDFIAVELVKGYIHYVFDLGNGPNVIKGNSDRPLNDNQWHNVVITRDSSNTHSLKVDTKVVTQVINGAKNLDLKGDLYMAGLAQGMYSNLPKLVASRDGFQGCLASVDLNGRLPDLINDALHRSGQIERGCEGPSTTCQEDSCANQGVCMQQWEGFTCDCSMTSYSGNQCNDPGATYIFGKSGGLILYTWPANDRPSTRSDRLAVGFSTTVKDGILVRIDSAPGLGDFLQLHIEQGKIGVVFNIGTVDISIKEERTPVNDGKYHVVRFTRNGGNATLQVDNWPVNEHYPTGNTDNERLQMVKQKIPFKYNRPVEEWLQEKGRQLTIFNTQAQIAIGGKDKGRLFQGQLSGLYYDGLKVLNMAAENNPNIKINGSVRLVGEVPSVSGTTQTTSMPPEMSTTVMETTTTMATTTTRKNRSTASIQPTSDDLVSSAECSSDDEDFVECEPSTDKSLSTSIFEGGYKAHAPKWESKDFRPNKVSETSRTTTTSLSPELIRFTASSSSGMVPKLPAGKMNNRDLKPQPDIVLLPLPTAYELDSTKLKSPLITSPMFRNVPTANPTEPGIRRVPGASEVIRESSSTTGMVVGIVAAAALCILILLYAMYKYRNRDEGSYQVDETRNYISNSAQSNGTLMKEKQASSKSGHKKQKNKDKEYYV.

The N-terminal stretch at 1–27 (MSFTLHSVFFTLKVSIFLGSLVGLCLG) is a signal peptide. Positions 28 to 202 (LEFMGLPNQW…SVQLEAEGPC (175 aa)) constitute a Laminin G-like 1 domain. Residues 28–1496 (LEFMGLPNQW…EVIRESSSTT (1469 aa)) lie on the Extracellular side of the membrane. 2 N-linked (GlcNAc...) asparagine glycosylation sites follow: Asn58 and Asn105. The 38-residue stretch at 198–235 (AEGPCGERPCENGGICFLLDGHPTCDCSTTGYGGTLCS) folds into the EGF-like 1 domain. 3 cysteine pairs are disulfide-bonded: Cys202–Cys213, Cys207–Cys222, and Cys224–Cys234. 2 Laminin G-like domains span residues 258–440 (VATF…VFKC) and 447–639 (DPIN…KSSC). Residues Asp304, Leu321, and Met374 each contribute to the Ca(2+) site. Disulfide bonds link Cys404-Cys440, Cys610-Cys639, Cys647-Cys658, Cys652-Cys667, and Cys669-Cys679. The EGF-like 2 domain occupies 643-680 (SAKQCDSYPCKNNAVCKDGWNRFICDCTGTGYWGRTCE). Laminin G-like domains are found at residues 685 to 857 (ILSY…IDYC) and 871 to 1046 (DPVT…ERGC). Ca(2+) is bound by residues Asp732 and Leu749. The N-linked (GlcNAc...) asparagine glycan is linked to Asn757. Residue Arg807 coordinates Ca(2+). Disulfide bonds link Cys1018-Cys1046, Cys1053-Cys1064, Cys1058-Cys1073, and Cys1075-Cys1085. An EGF-like 3 domain is found at 1049–1086 (PSTTCQEDSCANQGVCMQQWEGFTCDCSMTSYSGNQCN). The region spanning 1090–1290 (ATYIFGKSGG…NPNIKINGSV (201 aa)) is the Laminin G-like 6 domain. Residues Asp1142 and Ile1159 each coordinate Ca(2+). An N-linked (GlcNAc...) asparagine glycan is attached at Asn1189. Ca(2+) is bound by residues Ile1241 and Asn1243. Residues Asn1287 and Asn1331 are each glycosylated (N-linked (GlcNAc...) asparagine). Residues 1324–1348 (ATTTTRKNRSTASIQPTSDDLVSSA) are disordered. Over residues 1333 to 1348 (STASIQPTSDDLVSSA) the composition is skewed to polar residues. O-linked (Xyl...) (heparan sulfate) serine glycosylation occurs at Ser1347. Residues 1497 to 1517 (GMVVGIVAAAALCILILLYAM) form a helical membrane-spanning segment. The Cytoplasmic segment spans residues 1518–1571 (YKYRNRDEGSYQVDETRNYISNSAQSNGTLMKEKQASSKSGHKKQKNKDKEYYV). The tract at residues 1539–1571 (NSAQSNGTLMKEKQASSKSGHKKQKNKDKEYYV) is disordered.

It belongs to the neurexin family. In terms of assembly, the laminin G-like domain 2 binds to NXPH1. Specific isoforms bind to alpha-dystroglycan. The cytoplasmic C-terminal region binds to CASK. Specific isoforms bind neuroligins NLGN1, NLGN2 and NLGN3. Interacts with CLSTN3. In terms of processing, O-glycosylated; contains heparan sulfate. Heparan sulfate attachment is required for synapse development by mediating interactions with neuroligins. As to expression, brain and arteries (at protein level).

The protein localises to the presynaptic cell membrane. Neuronal cell surface protein that may be involved in cell recognition and cell adhesion. May mediate intracellular signaling. In Mus musculus (Mouse), this protein is Neurexin-3 (Nrxn3).